Here is a 662-residue protein sequence, read N- to C-terminus: Methyl-accepting chemotaxis protein TlpA (662 aa).

Over 1 to 16 (MKKTLTTIRRSSIARR) the chain is Cytoplasmic. The helical transmembrane segment at 17 to 37 (LIISFLLILIVPITALSVSAY) threads the bilayer. Over 38-281 (QSAVASLDVQ…IHDAASRVLI (244 aa)) the chain is Extracellular. Residues 152–228 (VTEPYESISS…KAGTELKGDW (77 aa)) enclose the Cache domain. The chain crosses the membrane as a helical span at residues 282-302 (MASIVLAIAIGAGMTAIYFVI). An HAMP domain is found at 303 to 355 (RSITKPLRRIVASAEKISEGDLTETIEINSKDELGVLSESFNHMAHSLRSLIH). Residues 303–662 (RSITKPLRRI…DLTKQFKVDK (360 aa)) are Cytoplasmic-facing. Glutamate methyl ester (Glu) occurs at positions 370, 594, 629, and 636. The 237-residue stretch at 374 to 610 (SADQTSRATE…EISAASNDIT (237 aa)) folds into the Methyl-accepting transducer domain.

This sequence belongs to the methyl-accepting chemotaxis (MCP) protein family. In terms of assembly, interacts with YabA.

The protein resides in the cell membrane. Functionally, chemotactic-signal transducers respond to changes in the concentration of attractants and repellents in the environment, transduce a signal from the outside to the inside of the cell, and facilitate sensory adaptation through the variation of the level of methylation. All amino acids serve as attractants in B.subtilis, they appear to cause an increase in the turnover methyl groups, leading to methylation of an unidentified acceptor, while repellents have been shown to cause a decrease in methyl group turnover. The methyl groups are added by a methyltransferase and removed by a methylesterase. This Bacillus subtilis (strain 168) protein is Methyl-accepting chemotaxis protein TlpA.